The chain runs to 288 residues: Ribosomal RNA small subunit methyltransferase A (288 aa).

S-adenosyl-L-methionine contacts are provided by asparagine 28, leucine 30, glycine 55, glutamate 76, aspartate 101, and asparagine 130.

It belongs to the class I-like SAM-binding methyltransferase superfamily. rRNA adenine N(6)-methyltransferase family. RsmA subfamily.

The protein localises to the cytoplasm. It carries out the reaction adenosine(1518)/adenosine(1519) in 16S rRNA + 4 S-adenosyl-L-methionine = N(6)-dimethyladenosine(1518)/N(6)-dimethyladenosine(1519) in 16S rRNA + 4 S-adenosyl-L-homocysteine + 4 H(+). Its function is as follows. Specifically dimethylates two adjacent adenosines (A1518 and A1519) in the loop of a conserved hairpin near the 3'-end of 16S rRNA in the 30S particle. May play a critical role in biogenesis of 30S subunits. This is Ribosomal RNA small subunit methyltransferase A from Moorella thermoacetica (strain ATCC 39073 / JCM 9320).